The chain runs to 319 residues: MAATKPAFNPPGKKGDIIFSVLVKLAALIVLLMLGGIIVSLIISSWPSIQKFGLAFLWTKEWDAPNDIYGALVPIYGTLVTSFIALLIAVPVSFGIALFLTELAPGWLKRPLGIAIELLAAIPSIVYGMWGLFIFAPLFAVYFQEPVGNIMSNIPIVGALFSGPAFGIGILAAGVILAIMIIPYIAAVMRDVFEQTPVMMKESAYGIGCTTWEVIWRIVLPFTKNGVIGGIMLGLGRALGETMAVTFIIGNTYQLDSASLYMPGNSITSALANEFAEAESGLHVAALMELGLILFVITFIVLAASKFMIMRLAKNEGAR.

Over 1-24 the chain is Cytoplasmic; that stretch reads MAATKPAFNPPGKKGDIIFSVLVK. A helical transmembrane segment spans residues 25-44; it reads LAALIVLLMLGGIIVSLIIS. The Periplasmic segment spans residues 45–74; sequence SWPSIQKFGLAFLWTKEWDAPNDIYGALVP. Residues 75–94 form a helical membrane-spanning segment; it reads IYGTLVTSFIALLIAVPVSF. The ABC transmembrane type-1 domain occupies 75 to 305; the sequence is IYGTLVTSFI…VITFIVLAAS (231 aa). The Cytoplasmic portion of the chain corresponds to 95–117; that stretch reads GIALFLTELAPGWLKRPLGIAIE. The helical transmembrane segment at 118–137 threads the bilayer; the sequence is LLAAIPSIVYGMWGLFIFAP. Over 138 to 167 the chain is Periplasmic; that stretch reads LFAVYFQEPVGNIMSNIPIVGALFSGPAFG. The helical transmembrane segment at 168-187 threads the bilayer; the sequence is IGILAAGVILAIMIIPYIAA. The Cytoplasmic segment spans residues 188 to 232; that stretch reads VMRDVFEQTPVMMKESAYGIGCTTWEVIWRIVLPFTKNGVIGGIM. The helical transmembrane segment at 233–252 threads the bilayer; that stretch reads LGLGRALGETMAVTFIIGNT. Over 253 to 283 the chain is Periplasmic; the sequence is YQLDSASLYMPGNSITSALANEFAEAESGLH. The helical transmembrane segment at 284–303 threads the bilayer; it reads VAALMELGLILFVITFIVLA. Topologically, residues 304–319 are cytoplasmic; it reads ASKFMIMRLAKNEGAR.

Belongs to the binding-protein-dependent transport system permease family. CysTW subfamily.

The protein localises to the cell inner membrane. In terms of biological role, part of the binding-protein-dependent transport system for phosphate; probably responsible for the translocation of the substrate across the membrane. The chain is Phosphate transport system permease protein PstC (pstC) from Escherichia coli O157:H7.